We begin with the raw amino-acid sequence, 270 residues long: Indole-3-glycerol phosphate synthase (270 aa).

It belongs to the TrpC family.

It catalyses the reaction 1-(2-carboxyphenylamino)-1-deoxy-D-ribulose 5-phosphate + H(+) = (1S,2R)-1-C-(indol-3-yl)glycerol 3-phosphate + CO2 + H2O. It functions in the pathway amino-acid biosynthesis; L-tryptophan biosynthesis; L-tryptophan from chorismate: step 4/5. The sequence is that of Indole-3-glycerol phosphate synthase from Beutenbergia cavernae (strain ATCC BAA-8 / DSM 12333 / CCUG 43141 / JCM 11478 / NBRC 16432 / NCIMB 13614 / HKI 0122).